A 183-amino-acid chain; its full sequence is 2-C-methyl-D-erythritol 2,4-cyclodiphosphate synthase (183 aa).

2 residues coordinate a divalent metal cation: D8 and H10. Residues 8-10 (DVH) and 34-35 (HS) each bind 4-CDP-2-C-methyl-D-erythritol 2-phosphate. H42 serves as a coordination point for a divalent metal cation. 4-CDP-2-C-methyl-D-erythritol 2-phosphate-binding positions include 56–58 (DIG), 61–65 (FPDTD), 132–135 (TTEE), and F139.

The protein belongs to the IspF family. Homotrimer. Requires a divalent metal cation as cofactor.

It catalyses the reaction 4-CDP-2-C-methyl-D-erythritol 2-phosphate = 2-C-methyl-D-erythritol 2,4-cyclic diphosphate + CMP. It participates in isoprenoid biosynthesis; isopentenyl diphosphate biosynthesis via DXP pathway; isopentenyl diphosphate from 1-deoxy-D-xylulose 5-phosphate: step 4/6. Functionally, involved in the biosynthesis of isopentenyl diphosphate (IPP) and dimethylallyl diphosphate (DMAPP), two major building blocks of isoprenoid compounds. Catalyzes the conversion of 4-diphosphocytidyl-2-C-methyl-D-erythritol 2-phosphate (CDP-ME2P) to 2-C-methyl-D-erythritol 2,4-cyclodiphosphate (ME-CPP) with a corresponding release of cytidine 5-monophosphate (CMP). This is 2-C-methyl-D-erythritol 2,4-cyclodiphosphate synthase from Lachnospira eligens (strain ATCC 27750 / DSM 3376 / VPI C15-48 / C15-B4) (Eubacterium eligens).